The chain runs to 257 residues: AA9 family lytic polysaccharide monooxygenase U (257 aa).

The first 19 residues, 1–19, serve as a signal peptide directing secretion; the sequence is MKLYLAAFLGAVATPGAFA. Histidine 20 is a Cu(2+) binding site. 2 N-linked (GlcNAc...) asparagine glycosylation sites follow: asparagine 29 and asparagine 71. The cysteines at positions 74 and 194 are disulfide-linked. Cu(2+) is bound at residue histidine 113. N-linked (GlcNAc...) asparagine glycosylation is present at asparagine 161. Glutamine 189 is a binding site for O2. Position 191 (tyrosine 191) interacts with Cu(2+).

This sequence belongs to the polysaccharide monooxygenase AA9 family. Requires Cu(2+) as cofactor.

It localises to the secreted. The catalysed reaction is [(1-&gt;4)-beta-D-glucosyl]n+m + reduced acceptor + O2 = 4-dehydro-beta-D-glucosyl-[(1-&gt;4)-beta-D-glucosyl]n-1 + [(1-&gt;4)-beta-D-glucosyl]m + acceptor + H2O.. In terms of biological role, lytic polysaccharide monooxygenase (LPMO) that depolymerizes crystalline and amorphous polysaccharides via the oxidation of scissile alpha- or beta-(1-4)-glycosidic bonds, yielding C1 and C4 oxidation products. Catalysis by LPMOs requires the reduction of the active-site copper from Cu(II) to Cu(I) by a reducing agent and H(2)O(2) or O(2) as a cosubstrate. Shows no activity on wheat arabinoxylan, konjac glucomannan, acetylated spruce galactoglucomannan, or cellopentaose. In Thermothielavioides terrestris (strain ATCC 38088 / NRRL 8126) (Thielavia terrestris), this protein is AA9 family lytic polysaccharide monooxygenase U.